A 400-amino-acid chain; its full sequence is Nicotinate phosphoribosyltransferase (400 aa).

Phosphohistidine; by autocatalysis is present on His220.

Belongs to the NAPRTase family. Transiently phosphorylated on a His residue during the reaction cycle. Phosphorylation strongly increases the affinity for substrates and increases the rate of nicotinate D-ribonucleotide production. Dephosphorylation regenerates the low-affinity form of the enzyme, leading to product release.

It catalyses the reaction nicotinate + 5-phospho-alpha-D-ribose 1-diphosphate + ATP + H2O = nicotinate beta-D-ribonucleotide + ADP + phosphate + diphosphate. It functions in the pathway cofactor biosynthesis; NAD(+) biosynthesis; nicotinate D-ribonucleotide from nicotinate: step 1/1. Functionally, catalyzes the synthesis of beta-nicotinate D-ribonucleotide from nicotinate and 5-phospho-D-ribose 1-phosphate at the expense of ATP. This Enterobacter sp. (strain 638) protein is Nicotinate phosphoribosyltransferase.